We begin with the raw amino-acid sequence, 198 residues long: Recombination protein RecR (198 aa).

Residues 57–72 form a C4-type zinc finger; the sequence is CSVCGHITEEDPCYIC. Positions 80-175 constitute a Toprim domain; that stretch reads SVICVVEDDK…KVTRLAQGLS (96 aa).

It belongs to the RecR family.

In terms of biological role, may play a role in DNA repair. It seems to be involved in an RecBC-independent recombinational process of DNA repair. It may act with RecF and RecO. The sequence is that of Recombination protein RecR from Staphylococcus carnosus (strain TM300).